Consider the following 263-residue polypeptide: Glucosamine-6-phosphate deaminase (263 aa).

The Proton acceptor; for enolization step role is filled by aspartate 67. Catalysis depends on asparagine 136, which acts as the For ring-opening step. The Proton acceptor; for ring-opening step role is filled by histidine 138. The active-site For ring-opening step is glutamate 143.

It belongs to the glucosamine/galactosamine-6-phosphate isomerase family. NagB subfamily. Homohexamer.

It catalyses the reaction alpha-D-glucosamine 6-phosphate + H2O = beta-D-fructose 6-phosphate + NH4(+). It participates in amino-sugar metabolism; N-acetylneuraminate degradation; D-fructose 6-phosphate from N-acetylneuraminate: step 5/5. In terms of biological role, catalyzes the reversible isomerization-deamination of glucosamine 6-phosphate (GlcN6P) to form fructose 6-phosphate (Fru6P) and ammonium ion. The polypeptide is Glucosamine-6-phosphate deaminase (Shewanella halifaxensis (strain HAW-EB4)).